The following is a 184-amino-acid chain: Phosphorelay intermediate protein YPD1 (184 aa).

In terms of domain architecture, HPt spans 30–125; that stretch reads EEGFSKSLVE…SAENVAVNDG (96 aa). The residue at position 69 (His69) is a Phosphohistidine. Positions 120–152 are disordered; it reads VAVNDGETNPENGSNGNETSNNKTNTSNIPDES. Positions 125 to 147 are enriched in low complexity; that stretch reads GETNPENGSNGNETSNNKTNTSN.

The protein belongs to the YPD1 family.

Its subcellular location is the cytoplasm. It is found in the nucleus. Functionally, phosphorelay intermediate protein that is part of the bifurcated SLN1-YPD1-SKN7/SSK1 two-component regulatory system, which controls activity of the HOG1 pathway and gene expression in response to oxidative stress and probably to changes in the osmolarity of the extracellular environment. Catalyzes the phosphoryl group transfer from the membrane-bound histidine kinase SLN1 to two distinct response regulators SSK1 and SKN7. This chain is Phosphorelay intermediate protein YPD1 (YPD1), found in Candida albicans (strain SC5314 / ATCC MYA-2876) (Yeast).